The primary structure comprises 589 residues: Ubiquilin-1 (589 aa).

Positions 1 to 11 (MAESGESGGPP) are enriched in gly residues. Disordered regions lie at residues 1–35 (MAES…AEPK) and 110–145 (NRPQ…ATSN). The residue at position 2 (A2) is an N-acetylalanine. The segment covering 12–35 (GSQDSAAGAEGAGAPAAAASAEPK) has biased composition (low complexity). The 75-residue stretch at 37-111 (MKVTVKTPKE…VHLVIKTQNR (75 aa)) folds into the Ubiquitin-like domain. A compositionally biased stretch (polar residues) spans 110 to 124 (NRPQDHSAQQTNTAG). Positions 125–145 (SNVTTSSTPNSNSTSGSATSN) are enriched in low complexity. Residues 178 to 428 (QLLSNPEMMV…LNNPLFAGNP (251 aa)) are interaction with UBXN4. STI1 domains follow at residues 182 to 210 (NPEM…QLIM) and 212 to 251 (NPQM…MQEM). The tract at residues 295–371 (PFASLVSNTS…NLVPGVGASM (77 aa)) is disordered. Residues 299-313 (LVSNTSSGEGSQPSR) are compositionally biased toward polar residues. A compositionally biased stretch (low complexity) spans 327 to 360 (QTSQSSSASSGTASTVGGTTGSTASGTSGQSTTA). STI1 domains lie at 387–434 (NPQL…QEQM) and 438–470 (LPTF…QQGL). Residues 488–520 (LGALGSTGGSSGTNGSNATPSENTSPTAGTTEP) form a disordered region. A compositionally biased stretch (gly residues) spans 489 to 499 (GALGSTGGSSG). Residues 509–520 (ENTSPTAGTTEP) are compositionally biased toward polar residues. A UBA domain is found at 546-586 (RFQQQLEQPSAMGFLNREANLQALIATGGDINAAIERLLGS).

Monomer and homodimer. Heterodimer with UBQLN2. Binds CD47, NBL1, GABRA1, GABRA2, GABRA3, GABRA6, GABRB1, GABRB2 and GABRB3. Binds UBE3A, BTRC, P4HB and MTOR. Interacts with the proteasome 19S subunit. Interacts (via ubiquitin-like domain) with TREX1; the interaction is direct and may control TREX1 subcellular location. Forms a complex with UBXN4 and VCP. Interacts (via UBA domain) with UBQLN4 (via ubiquitin-like domain). Found in a complex with UBQLN2 and MAP1LC3A/B/C. The monomeric form interacts with PSEN1 and PSEN2. Interacts with ORAI1. Interacts (via UBA domain) with TICAM1. Interacts with EPS15. Interacts (via UBA domain) with UBA52 and (via ubiquitin-like domain) with PSMD3 and PSMD4. Interacts with HERPUD1. Interacts with MAP1LC3A/B/C in the presence of UBQLN4. Interacts (via ubiquitin-like domain) with EPS15 (via UIM domains) and both the ubiquitinated and non-ubiquitinated forms can interact with EPS15. Interacts (via ubiquitin-like domain) with EPS15L1, HGS (via UIM domain) and STAM2 (via UIM domain). Interacts with BCL2L10/BCL-B; in the cytoplasm. Post-translationally, degraded during both macroautophagy and during chaperone-mediated autophagy (CMA). In terms of processing, phosphorylated. Ubiquitinated.

The protein resides in the nucleus. The protein localises to the cytoplasm. It is found in the endoplasmic reticulum. Its subcellular location is the cytoplasmic vesicle. It localises to the autophagosome. The protein resides in the cell membrane. Functionally, plays an important role in the regulation of different protein degradation mechanisms and pathways including ubiquitin-proteasome system (UPS), autophagy and endoplasmic reticulum-associated protein degradation (ERAD) pathway. Mediates the proteasomal targeting of misfolded or accumulated proteins for degradation by binding (via UBA domain) to their polyubiquitin chains and by interacting (via ubiquitin-like domain) with the subunits of the proteasome. Plays a role in the ERAD pathway via its interaction with ER-localized proteins UBXN4, VCP and HERPUD1 and may form a link between the polyubiquitinated ERAD substrates and the proteasome. Plays a role in unfolded protein response (UPR) by attenuating the induction of UPR-inducible genes, DDTI3/CHOP, HSPA5 and PDIA2 during ER stress. Involved in the regulation of macroautophagy and autophagosome formation; required for maturation of autophagy-related protein LC3 from the cytosolic form LC3-I to the membrane-bound form LC3-II and may assist in the maturation of autophagosomes to autolysosomes by mediating autophagosome-lysosome fusion. Negatively regulates the TICAM1/TRIF-dependent toll-like receptor signaling pathway by decreasing the abundance of TICAM1 via the autophagic pathway. Promotes the ubiquitination and lysosomal degradation of ORAI1, consequently down-regulating the ORAI1-mediated Ca2+ mobilization. Suppresses the maturation and proteasomal degradation of amyloid beta A4 protein (A4) by stimulating the lysine 63 (K63)-linked polyubiquitination. Delays the maturation of A4 by sequestering it in the Golgi apparatus and preventing its transport to the cell surface for subsequent processing. Ubiquitinates BCL2L10 and thereby stabilizes protein abundance. The sequence is that of Ubiquilin-1 (UBQLN1) from Pongo abelii (Sumatran orangutan).